The following is a 216-amino-acid chain: Thioredoxin-like 2, chloroplastic (216 aa).

The N-terminal 58 residues, 1–58, are a transit peptide targeting the chloroplast; it reads MAEALLPLPRRLVVTASTPACSSASSSTSPSPHCLLSRANPRPPRLAAPSPPRHRRLK. Over residues 19–40 the composition is skewed to low complexity; it reads PACSSASSSTSPSPHCLLSRAN. Residues 19-70 are disordered; it reads PACSSASSSTSPSPHCLLSRANPRPPRLAAPSPPRHRRLKAHAAVSDKSEQP. Over residues 41 to 51 the composition is skewed to pro residues; sequence PRPPRLAAPSP. The Thioredoxin domain occupies 61–188; it reads AAVSDKSEQP…LKDAIAVHNT (128 aa). Active-site nucleophile residues include Cys111 and Cys114. A disulfide bond links Cys111 and Cys114.

Belongs to the thioredoxin family.

It localises to the plastid. It is found in the chloroplast. In terms of biological role, probable thiol-disulfide oxidoreductase that may participate in various redox reactions. The polypeptide is Thioredoxin-like 2, chloroplastic (Oryza sativa subsp. japonica (Rice)).